The primary structure comprises 462 residues: L-seryl-tRNA(Sec) selenium transferase (462 aa).

An N6-(pyridoxal phosphate)lysine modification is found at Lys293.

Belongs to the SelA family. The cofactor is pyridoxal 5'-phosphate.

Its subcellular location is the cytoplasm. The catalysed reaction is L-seryl-tRNA(Sec) + selenophosphate + H(+) = L-selenocysteinyl-tRNA(Sec) + phosphate. The protein operates within aminoacyl-tRNA biosynthesis; selenocysteinyl-tRNA(Sec) biosynthesis; selenocysteinyl-tRNA(Sec) from L-seryl-tRNA(Sec) (bacterial route): step 1/1. Functionally, converts seryl-tRNA(Sec) to selenocysteinyl-tRNA(Sec) required for selenoprotein biosynthesis. The sequence is that of L-seryl-tRNA(Sec) selenium transferase from Clostridium botulinum (strain Langeland / NCTC 10281 / Type F).